The chain runs to 144 residues: Large ribosomal subunit protein uL16 (144 aa).

The protein belongs to the universal ribosomal protein uL16 family. Part of the 50S ribosomal subunit.

Its function is as follows. Binds 23S rRNA and is also seen to make contacts with the A and possibly P site tRNAs. The polypeptide is Large ribosomal subunit protein uL16 (Bacillus anthracis (strain A0248)).